The chain runs to 542 residues: Chaperonin GroEL 2 (542 aa).

ATP contacts are provided by residues 29–32 (TLGP), 86–90 (DGTTT), Gly413, 477–479 (NAA), and Asp493.

This sequence belongs to the chaperonin (HSP60) family. In terms of assembly, forms a cylinder of 14 subunits composed of two heptameric rings stacked back-to-back. Interacts with the co-chaperonin GroES.

The protein localises to the cytoplasm. The catalysed reaction is ATP + H2O + a folded polypeptide = ADP + phosphate + an unfolded polypeptide.. Functionally, together with its co-chaperonin GroES, plays an essential role in assisting protein folding. The GroEL-GroES system forms a nano-cage that allows encapsulation of the non-native substrate proteins and provides a physical environment optimized to promote and accelerate protein folding. This is Chaperonin GroEL 2 from Frankia alni (strain DSM 45986 / CECT 9034 / ACN14a).